The primary structure comprises 277 residues: Tryptophan synthase alpha chain (277 aa).

Active-site proton acceptor residues include Glu-59 and Asp-70.

It belongs to the TrpA family. Tetramer of two alpha and two beta chains.

The catalysed reaction is (1S,2R)-1-C-(indol-3-yl)glycerol 3-phosphate + L-serine = D-glyceraldehyde 3-phosphate + L-tryptophan + H2O. It functions in the pathway amino-acid biosynthesis; L-tryptophan biosynthesis; L-tryptophan from chorismate: step 5/5. In terms of biological role, the alpha subunit is responsible for the aldol cleavage of indoleglycerol phosphate to indole and glyceraldehyde 3-phosphate. The protein is Tryptophan synthase alpha chain of Streptomyces avermitilis (strain ATCC 31267 / DSM 46492 / JCM 5070 / NBRC 14893 / NCIMB 12804 / NRRL 8165 / MA-4680).